Here is a 152-residue protein sequence, read N- to C-terminus: SsrA-binding protein (152 aa).

This sequence belongs to the SmpB family.

Its subcellular location is the cytoplasm. Required for rescue of stalled ribosomes mediated by trans-translation. Binds to transfer-messenger RNA (tmRNA), required for stable association of tmRNA with ribosomes. tmRNA and SmpB together mimic tRNA shape, replacing the anticodon stem-loop with SmpB. tmRNA is encoded by the ssrA gene; the 2 termini fold to resemble tRNA(Ala) and it encodes a 'tag peptide', a short internal open reading frame. During trans-translation Ala-aminoacylated tmRNA acts like a tRNA, entering the A-site of stalled ribosomes, displacing the stalled mRNA. The ribosome then switches to translate the ORF on the tmRNA; the nascent peptide is terminated with the 'tag peptide' encoded by the tmRNA and targeted for degradation. The ribosome is freed to recommence translation, which seems to be the essential function of trans-translation. The polypeptide is SsrA-binding protein (Rickettsia rickettsii).